The chain runs to 464 residues: Na(+)/H(+) antiporter NhaA (464 aa).

A run of 12 helical transmembrane segments spans residues glycine 37 to cysteine 57, isoleucine 82 to isoleucine 102, valine 118 to phenylalanine 138, valine 145 to leucine 165, alanine 176 to phenylalanine 196, asparagine 200 to asparagine 220, alanine 226 to valine 246, alanine 248 to threonine 268, isoleucine 321 to valine 341, valine 360 to valine 380, valine 396 to leucine 416, and isoleucine 430 to isoleucine 450.

The protein belongs to the NhaA Na(+)/H(+) (TC 2.A.33) antiporter family.

Its subcellular location is the cell inner membrane. The catalysed reaction is Na(+)(in) + 2 H(+)(out) = Na(+)(out) + 2 H(+)(in). Functionally, na(+)/H(+) antiporter that extrudes sodium in exchange for external protons. This Dichelobacter nodosus (strain VCS1703A) protein is Na(+)/H(+) antiporter NhaA.